The sequence spans 343 residues: MLTERQLLILQTIIDDFIGSAQPVGSRTLAKKDEITFSSATIRNEMADLEELGFIEKTHSSSGRIPSEKGYRFYVDHLLAPQRLSAEEIVQIKDLFAERIFEAEKVAQQSAQILSELTNYTAIVLGPKLSTNKLKNVQIIPLGRKTAVAIIVTDTGHVQSKTITVPESVDLSDLEKMVNILNEKLFGVPMVELHNKIVKEVVTVLHKYVHNYDSAMKILDGTFQVPLSEKIYFGGKANMLAQPEFHDIQKVRSLLEMIDNEAEFYDILRKKQVGIQVNIGRENSSMAMEDCSLISATYSVGEEQLGTIAILGPTRMHYARVITLLQLFTKHFTEGLNGLYKSK.

This sequence belongs to the HrcA family.

Its function is as follows. Negative regulator of class I heat shock genes (grpE-dnaK-dnaJ and groELS operons). Prevents heat-shock induction of these operons. In Bacillus cytotoxicus (strain DSM 22905 / CIP 110041 / 391-98 / NVH 391-98), this protein is Heat-inducible transcription repressor HrcA.